The sequence spans 346 residues: RNA polymerase II holoenzyme cyclin-like subunit (346 aa).

The Cyclin N-terminal domain maps to 59–158 (NLLIKLGRRL…EMDSYLFLHH (100 aa)).

This sequence belongs to the cyclin family. Cyclin C subfamily. Component of the SRB8-11 complex, a regulatory module of the Mediator complex.

Its subcellular location is the nucleus. Component of the SRB8-11 complex. The SRB8-11 complex is a regulatory module of the Mediator complex which is itself involved in regulation of basal and activated RNA polymerase II-dependent transcription. The SRB8-11 complex may be involved in the transcriptional repression of a subset of genes regulated by Mediator. It may inhibit the association of the Mediator complex with RNA polymerase II to form the holoenzyme complex. The SRB8-11 complex phosphorylates the C-terminal domain (CTD) of the largest subunit of RNA polymerase II. The chain is RNA polymerase II holoenzyme cyclin-like subunit (SSN8) from Scheffersomyces stipitis (strain ATCC 58785 / CBS 6054 / NBRC 10063 / NRRL Y-11545) (Yeast).